The primary structure comprises 98 residues: Large ribosomal subunit protein uL23 (98 aa).

Belongs to the universal ribosomal protein uL23 family. Part of the 50S ribosomal subunit. Contacts protein L29, and trigger factor when it is bound to the ribosome.

One of the early assembly proteins it binds 23S rRNA. One of the proteins that surrounds the polypeptide exit tunnel on the outside of the ribosome. Forms the main docking site for trigger factor binding to the ribosome. The chain is Large ribosomal subunit protein uL23 from Clostridium beijerinckii (strain ATCC 51743 / NCIMB 8052) (Clostridium acetobutylicum).